The primary structure comprises 967 residues: Mediator of RNA polymerase II transcription subunit 14 (967 aa).

Belongs to the Mediator complex subunit 14 family. As to quaternary structure, component of the Mediator complex.

It localises to the nucleus. Functionally, component of the Mediator complex, a coactivator involved in the regulated transcription of nearly all RNA polymerase II-dependent genes. Mediator functions as a bridge to convey information from gene-specific regulatory proteins to the basal RNA polymerase II transcription machinery. Mediator is recruited to promoters by direct interactions with regulatory proteins and serves as a scaffold for the assembly of a functional preinitiation complex with RNA polymerase II and the general transcription factors. The chain is Mediator of RNA polymerase II transcription subunit 14 (RGR1) from Eremothecium gossypii (strain ATCC 10895 / CBS 109.51 / FGSC 9923 / NRRL Y-1056) (Yeast).